Here is a 305-residue protein sequence, read N- to C-terminus: Aspartate carbamoyltransferase catalytic subunit (305 aa).

Positions 54 and 55 each coordinate carbamoyl phosphate. Lysine 83 provides a ligand contact to L-aspartate. Carbamoyl phosphate contacts are provided by arginine 104, histidine 132, and glutamine 135. Residues arginine 165 and arginine 226 each contribute to the L-aspartate site. Positions 265 and 266 each coordinate carbamoyl phosphate.

The protein belongs to the aspartate/ornithine carbamoyltransferase superfamily. ATCase family. Heterooligomer of catalytic and regulatory chains.

The enzyme catalyses carbamoyl phosphate + L-aspartate = N-carbamoyl-L-aspartate + phosphate + H(+). It functions in the pathway pyrimidine metabolism; UMP biosynthesis via de novo pathway; (S)-dihydroorotate from bicarbonate: step 2/3. Functionally, catalyzes the condensation of carbamoyl phosphate and aspartate to form carbamoyl aspartate and inorganic phosphate, the committed step in the de novo pyrimidine nucleotide biosynthesis pathway. The polypeptide is Aspartate carbamoyltransferase catalytic subunit (Pyrobaculum calidifontis (strain DSM 21063 / JCM 11548 / VA1)).